The sequence spans 247 residues: EGF-like domain-containing protein C02B10.3 (247 aa).

Positions 1-17 (MTGALCIVLFGVTMVTA) are cleaved as a signal peptide. At 18–220 (ERPKIKDTHG…LCDKRCQKGH (203 aa)) the chain is on the extracellular side. EGF-like domains lie at 114-150 (FGTS…RFCE) and 180-213 (SGAS…DLCD). 4 cysteine pairs are disulfide-bonded: Cys-123-Cys-138, Cys-140-Cys-149, Cys-190-Cys-201, and Cys-203-Cys-212. The N-linked (GlcNAc...) asparagine glycan is linked to Asn-126. Residues 221 to 240 (VTCSTCSSFIPAALFAIILL) traverse the membrane as a helical segment. Over 241–247 (CVNKFNY) the chain is Cytoplasmic.

It localises to the membrane. This is EGF-like domain-containing protein C02B10.3 from Caenorhabditis elegans.